A 176-amino-acid chain; its full sequence is Glyoxalase domain-containing protein RDO1 (176 aa).

The VOC domain occupies 53–172; that stretch reads SLDHLVITCH…DNNLIELSSY (120 aa). Catalysis depends on Glu-168, which acts as the Proton donor/acceptor.

It belongs to the glyoxalase I family.

The protein operates within secondary metabolite biosynthesis. Glyoxalase domain-containing protein; part of the gene cluster that mediates the biosynthesis of itaconic acid and 2-hydroxyparaconate. Cis-aconitate is secreted by the mitochondrial tricarboxylate transporter MTT1. In the cytosol cis-aconitate is converted into trans-aconitate via isomerization by the aconitate-delta-isomerase ADI1. Decarboxylation of trans-aconitate by the trans-aconitate decarboxylase TAD1 then leads then to the production of itaconic acid. The cytochrome P450 monooxygenase CYP3 further converts itaconate to 2-hydroxyparaconate via oxidation of the double bond, leading to a transient epoxide, which can subsequently be lactonized to produce 2-hydroxyparaconate. Secretion of itaconate and possibly 2-hydroxyparaconate into the medium is mediated by the major facilitator ITP1. The glyoxalase domain-containing protein RDO1 is not involved in the biosynthesis of itaconate and 2-hydroxyparaconate, however, it might play a role in the further conversion of 2-hydroxyparaconate to itatartarate. This Mycosarcoma maydis (Corn smut fungus) protein is Glyoxalase domain-containing protein RDO1.